A 77-amino-acid chain; its full sequence is Acyl carrier protein (77 aa).

One can recognise a Carrier domain in the interval 2–77 (SSIEERVNKI…SAVDYIKAHS (76 aa)). Ser37 is subject to O-(pantetheine 4'-phosphoryl)serine.

The protein belongs to the acyl carrier protein (ACP) family. 4'-phosphopantetheine is transferred from CoA to a specific serine of apo-ACP by AcpS. This modification is essential for activity because fatty acids are bound in thioester linkage to the sulfhydryl of the prosthetic group.

The protein resides in the cytoplasm. It participates in lipid metabolism; fatty acid biosynthesis. Its function is as follows. Carrier of the growing fatty acid chain in fatty acid biosynthesis. This is Acyl carrier protein from Alcanivorax borkumensis (strain ATCC 700651 / DSM 11573 / NCIMB 13689 / SK2).